A 401-amino-acid chain; its full sequence is L-rhamnonate dehydratase (401 aa).

Substrate-binding residues include His29 and Arg55. Residues Asp222, Glu248, and Glu276 each coordinate Mg(2+). Residue His325 is the Proton acceptor of the active site. Glu345 is a substrate binding site.

It belongs to the mandelate racemase/muconate lactonizing enzyme family. RhamD subfamily. Homooctamer; tetramer of dimers. Mg(2+) is required as a cofactor.

It carries out the reaction L-rhamnonate = 2-dehydro-3-deoxy-L-rhamnonate + H2O. In terms of biological role, catalyzes the dehydration of L-rhamnonate to 2-keto-3-deoxy-L-rhamnonate (KDR). The polypeptide is L-rhamnonate dehydratase (Tolumonas auensis (strain DSM 9187 / NBRC 110442 / TA 4)).